Reading from the N-terminus, the 405-residue chain is Subtilisin-like protease 6 (405 aa).

A signal peptide spans 1-18; it reads FITKAIPIVLAALSAVNG. The propeptide occupies 19–125; it reads AKILEAGPHA…VRTSTNGTNL (107 aa). Positions 34 to 118 constitute an Inhibitor I9 domain; sequence KYIVVMKKDV…YIEPDFVVRT (85 aa). N-linked (GlcNAc...) asparagine glycosylation is found at N121 and N124. The Peptidase S8 domain occupies 133-405; the sequence is SWGLARVGSK…GEGTTGKLIY (273 aa). Active-site charge relay system residues include D165 and H196. N-linked (GlcNAc...) asparagine glycosylation is found at N250 and N262. S356 (charge relay system) is an active-site residue.

This sequence belongs to the peptidase S8 family.

The protein localises to the secreted. Functionally, secreted subtilisin-like serine protease with keratinolytic activity that contributes to pathogenicity. This chain is Subtilisin-like protease 6 (SUB6), found in Trichophyton schoenleinii.